A 419-amino-acid polypeptide reads, in one-letter code: Carboxypeptidase A1 (419 aa).

The signal sequence occupies residues 1–16 (MRGLLVLSVLLGAVFG). Positions 17 to 110 (KEDFVGHQVL…QEQMFAFRSR (94 aa)) are cleaved as a propeptide — activation peptide. The region spanning 121-414 (TYHTLEEIYD…LALLTIMEHT (294 aa)) is the Peptidase M14 domain. 2 residues coordinate Zn(2+): histidine 179 and glutamate 182. Residues 179-182 (HSRE), arginine 237, and 254-255 (NR) each bind substrate. An intrachain disulfide couples cysteine 248 to cysteine 271. Position 306 (histidine 306) interacts with Zn(2+). Residues 307-308 (SY) and tyrosine 358 each bind substrate. Glutamate 380 serves as the catalytic Proton donor/acceptor.

Belongs to the peptidase M14 family. In terms of assembly, monomer. May form a complex with proelastase 2. Zn(2+) serves as cofactor.

Its subcellular location is the secreted. It carries out the reaction Release of a C-terminal amino acid, but little or no action with -Asp, -Glu, -Arg, -Lys or -Pro.. The enzyme catalyses leukotriene C4 + H2O = leukotriene F4 + glycine. Inhibited by interaction with the S.magnifica carboxypeptidase inhibitor SmCI. Carboxypeptidase that catalyzes the release of a C-terminal amino acid, but has little or no action with -Asp, -Glu, -Arg, -Lys or -Pro. Catalyzes the conversion of leukotriene C4 to leukotriene F4 via the hydrolysis of an amide bond. This Homo sapiens (Human) protein is Carboxypeptidase A1.